A 633-amino-acid chain; its full sequence is MESGPKMLAPVCLVENNNEQLLVNQQAIQILEKISQPVVVVAIVGLYRTGKSYLMNHLAGQNHGFPLGSTVQSETKGIWMWCVPHPSKPNHTLVLLDTEGLGDVEKGDPKNDSWIFALAVLLCSTFVYNSMSTINHQALEQLHYVTELTELIKAKSSPRPDGVEDSTEFVSFFPDFLWTVRDFTLELKLNGHPITEDEYLENALKLIQGNNPRVQTSNFPRECIRRFFPKRKCFVFDRPTNDKDLLANIEKVSEKQLDPKFQEQTNIFCSYIFTHARTKTLREGITVTGNRLGTLAVTYVEAINSGAVPCLENAVITLAQRENSAAVQRAADYYSQQMAQRVKLPTDTLQELLDMHAACEREAIAIFMEHSFKDENQEFQKKFMETTMNKKGDFLLQNEESSVQYCQAKLNELSKGLMESISAGSFSVPGGHKLYMETKERIEQDYWQVPRKGVKAKEVFQRFLESQMVIEESILQSDKALTDREKAVAVDRAKKEAAEKEQELLKQKLQEQQQQMEAQDKSRKENIAQLKEKLQMEREHLLREQIMMLEHTQKVQNDWLHEGFKKKYEEMNAEISQFKRMIDTTKNDDTPWIARTLDNLADELTAILSAPAKLIGHGVKGVSSLFKKHKLPF.

A GTPase domain (Globular) region spans residues 1–310 (MESGPKMLAP…EAINSGAVPC (310 aa)). The region spanning 35-277 (SQPVVVVAIV…FCSYIFTHAR (243 aa)) is the GB1/RHD3-type G domain. Residues 45-52 (GLYRTGKS), 67-69 (LGS), and 97-101 (DTEGL) each bind GTP.

It belongs to the TRAFAC class dynamin-like GTPase superfamily. GB1/RHD3 GTPase family. GB1 subfamily. Post-translationally, (Microbial infection) Ubiquitinated by S.flexneri IpaH9.8, leading to its degradation by the proteasome, thereby preventing its ability to promote host defense against bacterial infection.

It is found in the cytoplasmic vesicle. It catalyses the reaction GTP + H2O = GDP + phosphate + H(+). Its function is as follows. Interferon (IFN)-inducible GTPase that plays important roles in innate immunity against a diverse range of bacterial, viral and protozoan pathogens, such as bacterial pathogens Listeria monocytogenes and Mycobacterium bovis BCG as well as the protozoan pathogen Toxoplasma gondii. Confers protection to several pathogens, including the bacterial pathogens Listeria monocytogenes and Mycobacterium bovis BCG as well as the protozoan pathogen Toxoplasma gondii. The protein is Guanylate-binding protein 6 (GBP6) of Homo sapiens (Human).